Reading from the N-terminus, the 105-residue chain is UPF0060 membrane protein Ajs_1326 (105 aa).

4 helical membrane passes run F4 to W24, S30 to L50, A60 to I80, and P82 to F102.

It belongs to the UPF0060 family.

The protein localises to the cell inner membrane. The sequence is that of UPF0060 membrane protein Ajs_1326 from Acidovorax sp. (strain JS42).